The primary structure comprises 283 residues: Endochitinase At2g43620 (283 aa).

An N-terminal signal peptide occupies residues 1 to 28 (MATLRAMLKNAFILFLFTLTIMAKTVFS). Residues 29-66 (QQCGTTGCAANLCCSRYGYCGTTDAYCGTGCRSGPCSS) form the Chitin-binding type-1 domain. Intrachain disulfides connect Cys31-Cys42, Cys36-Cys48, Cys41-Cys55, and Cys59-Cys64. The tract at residues 88–283 (DTIENVVTPA…GITPGANLSC (196 aa)) is catalytic. Residue Glu150 is the Proton donor of the active site. A glycan (N-linked (GlcNAc...) asparagine) is linked at Asn280.

Belongs to the glycosyl hydrolase 19 family. Chitinase class I subfamily.

It carries out the reaction Random endo-hydrolysis of N-acetyl-beta-D-glucosaminide (1-&gt;4)-beta-linkages in chitin and chitodextrins.. The sequence is that of Endochitinase At2g43620 from Arabidopsis thaliana (Mouse-ear cress).